Consider the following 98-residue polypeptide: Protein Frey 1 (98 aa).

The chain crosses the membrane as a helical span at residues 13–29; the sequence is AGLSLFLHLILAVALLR. Residues 60 to 87 are disordered; that stretch reads YGILPKHPRPRGPRPLLSRAQQRKRDGP.

As to quaternary structure, interacts with SPPL2C (via active sites); the interaction stabilizes FREY1 protein and inhibits SPPL2C proteolytic activity. Interacts with IZUMO1; the interaction retains IZUMO1 at the endoplasmic reticulum membrane and coordinates IZUMO1 complex assembly.

The protein resides in the endoplasmic reticulum membrane. Functionally, key regulator for male fertility expressed transiently in round spermatids where it recruits IZUMO1 at the endoplasmic reticulum (ER) membrane and coordinates the oolemmal binding multimeric complex (IZUMO1 complex) assembly. Upon complete assembly of the IZUMO1 complex, its ER retention is released, facilitating IZUMO1 complex export to the acrosome. Through the interaction with SPPL2C, inhibits its intramembrane protease activity directly accessing the catalytic center of an I-CLiP. This is Protein Frey 1 from Homo sapiens (Human).